Consider the following 450-residue polypeptide: 23S rRNA (uracil(1939)-C(5))-methyltransferase RlmD (450 aa).

Residues 1-22 (MAKHDRGLRFQPAGGSRAPQIP) are disordered. The TRAM domain maps to 20–78 (QIPVGKKQRLTIQRLANDGRGIAFVEGRTWFVSGALAGEEVEARVLGSHGKVVEARAER). [4Fe-4S] cluster contacts are provided by C91, C97, C100, and C179. Residues Q283, F312, N317, E333, D360, and D381 each coordinate S-adenosyl-L-methionine. The active-site Nucleophile is C407.

The protein belongs to the class I-like SAM-binding methyltransferase superfamily. RNA M5U methyltransferase family. RlmD subfamily.

The enzyme catalyses uridine(1939) in 23S rRNA + S-adenosyl-L-methionine = 5-methyluridine(1939) in 23S rRNA + S-adenosyl-L-homocysteine + H(+). Its function is as follows. Catalyzes the formation of 5-methyl-uridine at position 1939 (m5U1939) in 23S rRNA. This Pseudomonas fluorescens (strain ATCC BAA-477 / NRRL B-23932 / Pf-5) protein is 23S rRNA (uracil(1939)-C(5))-methyltransferase RlmD.